The following is a 461-amino-acid chain: Lysosomal proton-coupled steroid conjugate and bile acid symporter SLC46A3 (461 aa).

The N-terminal stretch at 1 to 25 (MKISFIEPAILLYAFAMTLTIPLTA) is a signal peptide. Residues 26 to 70 (QYVYRRIWEETGNYTFTSSSNVSECEQNKSSSTFAFQEEVQKKAS) are Extracellular-facing. 3 N-linked (GlcNAc...) asparagine glycosylation sites follow: N38, N46, and N53. A helical membrane pass occupies residues 71–91 (LFSLQVEISGLIPGLVSTFML). Topologically, residues 92 to 103 (LSSSDNHGRKLP) are cytoplasmic. The helical transmembrane segment at 104-124 (MVLSSLGSLGTNLWLCAMSYF) threads the bilayer. Residues 125–135 (DLPLQLLVAST) are Extracellular-facing. The helical transmembrane segment at 136–156 (FIGALFGNYTTFWGACFAYIV) threads the bilayer. The Cytoplasmic portion of the chain corresponds to 157-170 (DQEKEYKHRIIRIA). The helical transmembrane segment at 171 to 191 (VLDFMLGVVTGLTGLSSGYFI) threads the bilayer. At 192–197 (RELGFA) the chain is on the extracellular side. A helical membrane pass occupies residues 198 to 218 (WSYFIIAVVVLVNLAYILFFL). Topologically, residues 219-260 (SDPIKESSSQIVTMSCSESLKDLFYRTYMLFKNGSCKRRSLL) are cytoplasmic. A helical membrane pass occupies residues 261-281 (CLLIFTLVVYFFVVFGITPVF). The Extracellular portion of the chain corresponds to 282–301 (TLYELGPPLCWNEVYIGYGS). Residues 302 to 322 (ALGSLSFLSSFLGIWLFSYCL) form a helical membrane-spanning segment. The Cytoplasmic portion of the chain corresponds to 323-324 (KD). The chain crosses the membrane as a helical span at residues 325 to 345 (IHIAYVGIFTTMVGMMLTAFT). Topologically, residues 346–347 (RT) are extracellular. A helical membrane pass occupies residues 348 to 368 (TLMMFLVRISFFFTIMPLSIL). The Cytoplasmic segment spans residues 369-381 (RSMLSKVVHSTEQ). The helical transmembrane segment at 382-402 (GVLFACIAFLETLGGVTSTSA) threads the bilayer. At 403–415 (YNGIYSATVAWYP) the chain is on the extracellular side. A helical membrane pass occupies residues 416–436 (GFVFLLSAGLLVLPAVSLCMV). Over 437-461 (KCIGWEEGSYTLLIHDEPSEHTSDS) the chain is Cytoplasmic. Residues 446 to 449 (YTLL) carry the Tyrosine-based lysosomal-sorting motif motif.

The protein belongs to the major facilitator superfamily. SLC46A family.

Its subcellular location is the lysosome membrane. The enzyme catalyses estrone 3-sulfate(out) + n H(+)(out) = estrone 3-sulfate(in) + n H(+)(in). It catalyses the reaction 25-hydroxyvitamin D3 sulfate(out) + n H(+)(out) = 25-hydroxyvitamin D3 sulfate(in) + n H(+)(in). It carries out the reaction cholate(out) + n H(+)(out) = cholate(in) + n H(+)(in). The catalysed reaction is glycocholate(out) + n H(+)(out) = glycocholate(in) + n H(+)(in). The enzyme catalyses taurocholate(out) + n H(+)(out) = taurocholate(in) + n H(+)(in). It catalyses the reaction dehydroepiandrosterone 3-sulfate(out) + n H(+)(out) = dehydroepiandrosterone 3-sulfate(in) + n H(+)(in). It carries out the reaction N-acetyl-D-muramoyl-L-alanyl-D-isoglutamine(out) + n H(+)(out) = N-acetyl-D-muramoyl-L-alanyl-D-isoglutamine(in) + n H(+)(in). The catalysed reaction is 2',3'-cGAMP(out) + n H(+)(out) = 2',3'-cGAMP(in) + n H(+)(in). Its function is as follows. Lysosomal proton-coupled steroid conjugate and bile acid transporter. Preferentially recognizes lipophilic steroid conjugates or bile acis as endogenous substrates and seems to mediate escape from lysosomes to the cytoplasm. Modulates hepatic cytosolic copper homeostasis, maybe acting as a lysosomal copper transporter and sequestering copper ions in the lysosome. Delivers pathogen-associated molecular patterns to cytosolic pattern recognition receptors as part of the innate immune response to microbes. Selectively transports bacterial muramyl dipeptide (MDP) into the cytosol for recognition by NOD2, triggering inflammatory responses. Likely acts as a redundant importer of cyclic GMP-AMP dinucleotides (cGAMPs) in monocyte and macrophage cell lineages. The transport mechanism, its electrogenicity and stoichiometry remain to be elucidated. In Rattus norvegicus (Rat), this protein is Lysosomal proton-coupled steroid conjugate and bile acid symporter SLC46A3 (Slc46a3).